A 248-amino-acid polypeptide reads, in one-letter code: Ribosomal RNA small subunit methyltransferase G (248 aa).

S-adenosyl-L-methionine-binding positions include glycine 85, phenylalanine 90, 108 to 110 (DSS), 137 to 138 (AE), and arginine 156.

It belongs to the methyltransferase superfamily. RNA methyltransferase RsmG family.

The protein localises to the cytoplasm. Functionally, specifically methylates the N7 position of a guanine in 16S rRNA. The chain is Ribosomal RNA small subunit methyltransferase G from Prochlorococcus marinus (strain NATL2A).